The sequence spans 748 residues: Subtilisin-like protease (748 aa).

The first 24 residues, 1–24 (MMKMELRLLVSLIFILCSISMLAA), serve as a signal peptide directing secretion. Residues 37 to 115 (TYIVHVKKSE…ARPERTLELH (79 aa)) form the Inhibitor I9 domain. The 479-residue stretch at 122 to 600 (FLGLKQGQGL…AGHVNPVKAN (479 aa)) folds into the Peptidase S8 domain. Active-site charge relay system residues include aspartate 147 and histidine 206. The 90-residue stretch at 365-454 (PLVYPGSFGY…VEVSYAAGLT (90 aa)) folds into the PA domain. 3 N-linked (GlcNAc...) asparagine glycosylation sites follow: asparagine 376, asparagine 380, and asparagine 405. Serine 533 functions as the Charge relay system in the catalytic mechanism. Residues asparagine 675 and asparagine 722 are each glycosylated (N-linked (GlcNAc...) asparagine).

It belongs to the peptidase S8 family.

Its subcellular location is the secreted. The protein resides in the extracellular space. It localises to the apoplast. Functionally, required for arbuscular mycorrhiza (AM) development during AM symbiosis with AM fungi (e.g. Glomeromycota intraradices). The chain is Subtilisin-like protease from Medicago truncatula (Barrel medic).